Reading from the N-terminus, the 505-residue chain is uncharacterized protein (505 aa).

The disordered stretch occupies residues 461–480 (RTDVHPGNSDDEGAYSSADS).

The protein to M.jannaschii MJ0787.

This is an uncharacterized protein from Methanothermobacter thermautotrophicus (strain ATCC 29096 / DSM 1053 / JCM 10044 / NBRC 100330 / Delta H) (Methanobacterium thermoautotrophicum).